The following is a 195-amino-acid chain: Kiwa protein KwaA (195 aa).

3 helical membrane passes run Gly10–Ile30, Leu46–Phe66, and Ile117–Tyr137.

It localises to the cell inner membrane. Functionally, component of antiviral defense system Kiwa, composed of KwaA and KwaB. Expression of Kiwa in E.coli (strain MG1655) confers resistance to phages lambda and SECphi18. This chain is Kiwa protein KwaA, found in Escherichia coli O55:H7 (strain RM12579 / EPEC).